The sequence spans 254 residues: Pimeloyl-[acyl-carrier protein] methyl ester esterase (254 aa).

An AB hydrolase-1 domain is found at 16 to 241 (LVLLHGWGMN…QSSHAPFMTE (226 aa)). Substrate is bound by residues Trp-22, 82–83 (SL), and 143–147 (FMALQ). The active-site Nucleophile is the Ser-82. Catalysis depends on residues Asp-207 and His-235. Residue His-235 participates in substrate binding.

This sequence belongs to the AB hydrolase superfamily. Carboxylesterase BioH family. As to quaternary structure, monomer.

Its subcellular location is the cytoplasm. It catalyses the reaction 6-carboxyhexanoyl-[ACP] methyl ester + H2O = 6-carboxyhexanoyl-[ACP] + methanol + H(+). The protein operates within cofactor biosynthesis; biotin biosynthesis. In terms of biological role, the physiological role of BioH is to remove the methyl group introduced by BioC when the pimeloyl moiety is complete. It allows to synthesize pimeloyl-ACP via the fatty acid synthetic pathway through the hydrolysis of the ester bonds of pimeloyl-ACP esters. This chain is Pimeloyl-[acyl-carrier protein] methyl ester esterase, found in Vibrio campbellii (strain ATCC BAA-1116).